The following is a 210-amino-acid chain: LexA repressor (210 aa).

The H-T-H motif DNA-binding region spans 29–49; the sequence is VREIGEAVDLSSTSTVHGHIS. Residues Ser-130 and Lys-168 each act as for autocatalytic cleavage activity in the active site.

It belongs to the peptidase S24 family. As to quaternary structure, homodimer.

It carries out the reaction Hydrolysis of Ala-|-Gly bond in repressor LexA.. Represses a number of genes involved in the response to DNA damage (SOS response), including recA and lexA. In the presence of single-stranded DNA, RecA interacts with LexA causing an autocatalytic cleavage which disrupts the DNA-binding part of LexA, leading to derepression of the SOS regulon and eventually DNA repair. This is LexA repressor from Lactiplantibacillus plantarum (strain ATCC BAA-793 / NCIMB 8826 / WCFS1) (Lactobacillus plantarum).